Reading from the N-terminus, the 303-residue chain is Nucleotide-binding protein USA300HOU_0794 (303 aa).

18–25 (GLSGAGKS) is a binding site for ATP. 69-72 (DLRG) is a binding site for GTP.

It belongs to the RapZ-like family.

Functionally, displays ATPase and GTPase activities. The sequence is that of Nucleotide-binding protein USA300HOU_0794 from Staphylococcus aureus (strain USA300 / TCH1516).